Reading from the N-terminus, the 332-residue chain is 4-hydroxyproline 2-epimerase 2 (332 aa).

The active-site Proton acceptor is the cysteine 89. Substrate contacts are provided by residues histidine 222, aspartate 248, and glycine 253–threonine 254.

It belongs to the proline racemase family.

It catalyses the reaction trans-4-hydroxy-L-proline = cis-4-hydroxy-D-proline. Its function is as follows. Catalyzes the epimerization of trans-4-hydroxy-L-proline (t4LHyp) to cis-4-hydroxy-D-proline (c4DHyp). Is likely involved in a degradation pathway that converts t4LHyp to alpha-ketoglutarate. Displays no proline racemase activity. The chain is 4-hydroxyproline 2-epimerase 2 from Rhizobium rhizogenes (strain K84 / ATCC BAA-868) (Agrobacterium radiobacter).